Consider the following 205-residue polypeptide: GTP cyclohydrolase-2 (205 aa).

Residue 49-53 (RLHSE) coordinates GTP. Zn(2+) contacts are provided by Cys54, Cys65, and Cys67. GTP-binding positions include Gln70, 92 to 94 (EGR), and Thr114. Catalysis depends on Asp126, which acts as the Proton acceptor. Arg128 serves as the catalytic Nucleophile. GTP contacts are provided by Thr149 and Lys154.

It belongs to the GTP cyclohydrolase II family. Requires Zn(2+) as cofactor.

The enzyme catalyses GTP + 4 H2O = 2,5-diamino-6-hydroxy-4-(5-phosphoribosylamino)-pyrimidine + formate + 2 phosphate + 3 H(+). It functions in the pathway cofactor biosynthesis; riboflavin biosynthesis; 5-amino-6-(D-ribitylamino)uracil from GTP: step 1/4. In terms of biological role, catalyzes the conversion of GTP to 2,5-diamino-6-ribosylamino-4(3H)-pyrimidinone 5'-phosphate (DARP), formate and pyrophosphate. This chain is GTP cyclohydrolase-2, found in Pseudomonas aeruginosa (strain LESB58).